Reading from the N-terminus, the 2175-residue chain is Non-reducing polyketide synthase PKS1 (2175 aa).

Residues 5–242 (LLFGDQTAEQ…VSIPIYGPYH (238 aa)) form an N-terminal acylcarrier protein transacylase domain (SAT) region. The Ketosynthase family 3 (KS3) domain maps to 369 to 801 (TDKIAIVGMA…GGNTALLIED (433 aa)). Residues C541, H676, and H719 each act as for beta-ketoacyl synthase activity in the active site. The tract at residues 900 to 1212 (FCFTGQGSQY…ISTSICHLFT (313 aa)) is malonyl-CoA:ACP transacylase (MAT) domain. Catalysis depends on S988, which acts as the For acyl/malonyl transferase activity. The tract at residues 1285–1604 (STSCQNVISE…RKVLNVFLPP (320 aa)) is product template (PT) domain. The tract at residues 1289-1424 (QNVISEEFDG…CTIRYEDKAV (136 aa)) is N-terminal hotdog fold. The 311-residue stretch at 1289 to 1599 (QNVISEEFDG…FQQIPRKVLN (311 aa)) folds into the PKS/mFAS DH domain. H1321 (proton acceptor; for dehydratase activity) is an active-site residue. The tract at residues 1452 to 1599 (AHKVQRGMAY…FQQIPRKVLN (148 aa)) is C-terminal hotdog fold. D1512 functions as the Proton donor; for dehydratase activity in the catalytic mechanism. Residues 1640-1664 (PVRKSAGPAKAAAAPSMPKPSKVAA) form a disordered region. The segment covering 1643–1664 (KSAGPAKAAAAPSMPKPSKVAA) has biased composition (low complexity). A Carrier 1 domain is found at 1666-1743 (KPAGSMVDKV…EMKKYFSQFN (78 aa)). At S1703 the chain carries O-(pantetheine 4'-phosphoryl)serine. A disordered region spans residues 1766–1804 (ATPFDEMSTPASSAPSVPQSDAGKPSPDSPTGDSLSDDV). The segment covering 1774 to 1784 (TPASSAPSVPQ) has biased composition (polar residues). The region spanning 1801-1878 (SDDVGDVSIA…DIENALGMRP (78 aa)) is the Carrier 2 domain. S1838 is modified (O-(pantetheine 4'-phosphoryl)serine). A disordered region spans residues 1879–1899 (KPKAVGPKLSKPSTKTDMNEV). Polar residues predominate over residues 1889–1899 (KPSTKTDMNEV). A claisen cyclase domain region spans residues 1932 to 2158 (KVFFLPDGSG…GHHFSMMKDP (227 aa)). Residue S2002 is the For Claisen cyclase activity of the active site.

Pantetheine 4'-phosphate is required as a cofactor.

The enzyme catalyses 6 malonyl-CoA + acetyl-CoA + 6 H(+) = naphtopyrone YWA1 + 6 CO2 + 7 CoA + H2O. Its pathway is pigment biosynthesis; melanin biosynthesis. Its function is as follows. Non-reducing polyketide synthase; part of the gene cluster 29 that mediates the biosynthesis of mediates the biosynthesis of dihydroxynaphthalene (DHN)-melanin, a bluish-green pigment and a structural component of the conidial wall. The first step of the pathway is the production of the heptaketide naphtopyrone YWA1 by the polyketide synthase PKS1 though condensation of acetyl-CoA with malonyl-CoA. This Zymoseptoria tritici (strain CBS 115943 / IPO323) (Speckled leaf blotch fungus) protein is Non-reducing polyketide synthase PKS1.